The sequence spans 323 residues: Aspartate carbamoyltransferase catalytic subunit (323 aa).

2 residues coordinate carbamoyl phosphate: Arg55 and Thr56. An L-aspartate-binding site is contributed by Lys83. Carbamoyl phosphate contacts are provided by Arg105, His133, and Gln136. Residues Arg166 and Arg220 each coordinate L-aspartate. Carbamoyl phosphate contacts are provided by Gly261 and Pro262.

It belongs to the aspartate/ornithine carbamoyltransferase superfamily. ATCase family. As to quaternary structure, heterododecamer (2C3:3R2) of six catalytic PyrB chains organized as two trimers (C3), and six regulatory PyrI chains organized as three dimers (R2).

The catalysed reaction is carbamoyl phosphate + L-aspartate = N-carbamoyl-L-aspartate + phosphate + H(+). It functions in the pathway pyrimidine metabolism; UMP biosynthesis via de novo pathway; (S)-dihydroorotate from bicarbonate: step 2/3. Catalyzes the condensation of carbamoyl phosphate and aspartate to form carbamoyl aspartate and inorganic phosphate, the committed step in the de novo pyrimidine nucleotide biosynthesis pathway. The protein is Aspartate carbamoyltransferase catalytic subunit of Acidothermus cellulolyticus (strain ATCC 43068 / DSM 8971 / 11B).